The chain runs to 133 residues: Probable nuclear transport factor 2 (133 aa).

Positions 10–128 (VAKAFIQHYY…YFIGNEIFRL (119 aa)) constitute an NTF2 domain.

It is found in the cytoplasm. Its function is as follows. Facilitates protein transport into the nucleus. Could be part of a multicomponent system of cytosolic factors that assemble at the pore complex during nuclear import. This chain is Probable nuclear transport factor 2 (ran-4), found in Caenorhabditis elegans.